Here is an 83-residue protein sequence, read N- to C-terminus: Acyl carrier protein (83 aa).

Residues S2–H77 enclose the Carrier domain. S37 carries the O-(pantetheine 4'-phosphoryl)serine modification.

Belongs to the acyl carrier protein (ACP) family. 4'-phosphopantetheine is transferred from CoA to a specific serine of apo-ACP by AcpS. This modification is essential for activity because fatty acids are bound in thioester linkage to the sulfhydryl of the prosthetic group.

The protein localises to the cytoplasm. The protein operates within lipid metabolism; fatty acid biosynthesis. Carrier of the growing fatty acid chain in fatty acid biosynthesis. The polypeptide is Acyl carrier protein (Blochmanniella pennsylvanica (strain BPEN)).